Here is a 321-residue protein sequence, read N- to C-terminus: Sideroflexin-3 (321 aa).

N-acetylmethionine is present on M1. The next 4 membrane-spanning stretches (helical) occupy residues 146 to 164 (LGTAYVSATTGAVATALGL), 174 to 194 (LVGRFVPFAAVAAANCINIPL), 226 to 246 (FQVVISRICMAIPAMAIPPLI), and 266 to 286 (LQVGLVGFCLVFATPLCCALF).

The protein belongs to the sideroflexin family.

The protein resides in the mitochondrion membrane. It carries out the reaction L-serine(in) = L-serine(out). Its function is as follows. Mitochondrial serine transporter that mediates transport of serine into mitochondria, an important step of the one-carbon metabolism pathway. Mitochondrial serine is converted to glycine and formate, which then exits to the cytosol where it is used to generate the charged folates that serve as one-carbon donors. The sequence is that of Sideroflexin-3 from Homo sapiens (Human).